Here is a 213-residue protein sequence, read N- to C-terminus: Peroxisomal protein 2 (213 aa).

A Peroxisomal target signal 1 (PTS1) motif is present at residues 211–213 (ETL).

It belongs to the PXP2 family.

The protein localises to the peroxisome matrix. It is found in the cytoplasm. Its subcellular location is the cytosol. The protein resides in the nucleus. In terms of biological role, probably involved in peroxisome formation or maintenance as well as in amino acid metabolism. In Schizosaccharomyces pombe (strain 972 / ATCC 24843) (Fission yeast), this protein is Peroxisomal protein 2.